The following is a 141-amino-acid chain: Large ribosomal subunit protein uL11 (141 aa).

This sequence belongs to the universal ribosomal protein uL11 family. As to quaternary structure, part of the ribosomal stalk of the 50S ribosomal subunit. Interacts with L10 and the large rRNA to form the base of the stalk. L10 forms an elongated spine to which L12 dimers bind in a sequential fashion forming a multimeric L10(L12)X complex. Post-translationally, one or more lysine residues are methylated.

Functionally, forms part of the ribosomal stalk which helps the ribosome interact with GTP-bound translation factors. This is Large ribosomal subunit protein uL11 from Leptospira biflexa serovar Patoc (strain Patoc 1 / Ames).